The sequence spans 128 residues: Fluoride-specific ion channel FluC (128 aa).

4 helical membrane-spanning segments follow: residues 4-24 (VMGI…RYAI), 37-57 (FGTF…WSFF), 65-85 (TFRL…STFS), and 101-121 (FGYL…GFFI). Residues Gly-76 and Thr-79 each coordinate Na(+).

This sequence belongs to the fluoride channel Fluc/FEX (TC 1.A.43) family.

Its subcellular location is the cell inner membrane. The catalysed reaction is fluoride(in) = fluoride(out). With respect to regulation, na(+) is not transported, but it plays an essential structural role and its presence is essential for fluoride channel function. Functionally, fluoride-specific ion channel. Important for reducing fluoride concentration in the cell, thus reducing its toxicity. This is Fluoride-specific ion channel FluC from Desulfotalea psychrophila (strain LSv54 / DSM 12343).